Consider the following 137-residue polypeptide: MKVPVFQLSCLLCLIVCLLCSVKAQKDDQYDTEKSRILEIYNNPAVDEFTKERNIPKLIEFYRRYPARIQLPDADKRQWDEFVARYTESQTKLVDGLPAQGGWVGSVLSSTVGNLIAKFIFSLIRYDPTTPKPTGAH.

Positions 1-24 are cleaved as a signal peptide; that stretch reads MKVPVFQLSCLLCLIVCLLCSVKA.

Belongs to the Turandot family.

The protein resides in the secreted. In terms of biological role, a humoral factor that may play a role in stress tolerance. The polypeptide is Protein Turandot X (Drosophila persimilis (Fruit fly)).